A 385-amino-acid chain; its full sequence is GPN-loop GTPase 1 (385 aa).

13 to 18 (GSGKTT) contacts GTP. Residues 70–72 (GPN) carry the Gly-Pro-Asn (GPN)-loop; involved in dimer interface motif. 173–176 (NKTD) provides a ligand contact to GTP. 3 positions are modified to phosphoserine: serine 304, serine 308, and serine 313. Acidic residues predominate over residues 317-332 (EDANDGLVDRDEDEGV). Residues 317–356 (EDANDGLVDRDEDEGVEREYTFPGEERTKGEVNENSAPDL) are disordered. Positions 333–348 (EREYTFPGEERTKGEV) are enriched in basic and acidic residues. Phosphoserine is present on serine 352. Residue lysine 369 forms a Glycyl lysine isopeptide (Lys-Gly) (interchain with G-Cter in ubiquitin) linkage.

Belongs to the GPN-loop GTPase family. In terms of assembly, heterodimers with GPN2 or GPN3. Binds to RNA polymerase II (RNAPII) in a GTP-dependent manner. Interacts with nuclear pore protein NUP133 and nuclear export factor CRM1. Interacts with PCL1. In terms of processing, phosphorylated by the cyclin-CDK PCL1-PHO85.

The protein resides in the cytoplasm. In terms of biological role, small GTPase required for proper nuclear import of RNA polymerase II (RNAPII). May act at an RNAP assembly step prior to nuclear import. Promotes sister chromatid separation during anaphase. In Saccharomyces cerevisiae (strain ATCC 204508 / S288c) (Baker's yeast), this protein is GPN-loop GTPase 1.